Here is a 695-residue protein sequence, read N- to C-terminus: Probable pre-mRNA-splicing factor ATP-dependent RNA helicase DEAH9 (695 aa).

The Helicase ATP-binding domain occupies 58–223 (LYLVENHATT…FNSSKKRHAP (166 aa)). ATP is bound at residue 71–78 (GETGSGKT). The short motif at 170–173 (DEAH) is the DEAH box element. Residues 261 to 438 (SVVSTILLIN…STVIQLKALG (178 aa)) enclose the Helicase C-terminal domain.

It belongs to the DEAD box helicase family. DEAH subfamily. DDX35 sub-subfamily.

It carries out the reaction ATP + H2O = ADP + phosphate + H(+). Its function is as follows. May be involved in pre-mRNA splicing. In Arabidopsis thaliana (Mouse-ear cress), this protein is Probable pre-mRNA-splicing factor ATP-dependent RNA helicase DEAH9.